The primary structure comprises 294 residues: Lipoprotein NlpI (294 aa).

Positions 1–18 are cleaved as a signal peptide; the sequence is MKPFLRWCFVATALTLAG. The N-palmitoyl cysteine moiety is linked to residue Cys-19. Cys-19 carries S-diacylglycerol cysteine lipidation. TPR repeat units lie at residues 62-95, 96-129, and 234-267; these read AQLLYERGVLYDSLGLRALARNDFSQALAIRPDM, PEVFNYLGIYLTQAGNFDAAYEAFDSVLELDPTY, and SETNFYLGKYYLSLGDSDSATALFKLAVANNVHN.

In terms of assembly, homodimer.

The protein localises to the cell membrane. In terms of biological role, may be involved in cell division. May play a role in bacterial septation or regulation of cell wall degradation during cell division. The polypeptide is Lipoprotein NlpI (nlpI) (Shigella boydii serotype 4 (strain Sb227)).